The primary structure comprises 200 residues: uncharacterized protein (200 aa).

This is an uncharacterized protein from Commelina yellow mottle virus (CoYMV).